Consider the following 205-residue polypeptide: Large ribosomal subunit protein bL25A (205 aa).

Belongs to the bacterial ribosomal protein bL25 family. CTC subfamily. In terms of assembly, part of the 50S ribosomal subunit; part of the 5S rRNA/L5/L18/L25 subcomplex. Contacts the 5S rRNA. Binds to the 5S rRNA independently of L5 and L18.

This is one of the proteins that binds to the 5S RNA in the ribosome where it forms part of the central protuberance. This Symbiobacterium thermophilum (strain DSM 24528 / JCM 14929 / IAM 14863 / T) protein is Large ribosomal subunit protein bL25A.